Here is a 392-residue protein sequence, read N- to C-terminus: Phosphoglycerate kinase (392 aa).

Substrate-binding positions include 21 to 23 (DLN), Arg36, 59 to 62 (HLGR), Arg113, and Arg146. Residues Lys197, Glu319, and 345–348 (GGDT) each bind ATP.

This sequence belongs to the phosphoglycerate kinase family. Monomer.

The protein localises to the cytoplasm. The catalysed reaction is (2R)-3-phosphoglycerate + ATP = (2R)-3-phospho-glyceroyl phosphate + ADP. It participates in carbohydrate degradation; glycolysis; pyruvate from D-glyceraldehyde 3-phosphate: step 2/5. This Nitrosococcus oceani (strain ATCC 19707 / BCRC 17464 / JCM 30415 / NCIMB 11848 / C-107) protein is Phosphoglycerate kinase.